Consider the following 130-residue polypeptide: Large ribosomal subunit protein bL12c (130 aa).

This sequence belongs to the bacterial ribosomal protein bL12 family. As to quaternary structure, homodimer. Part of the ribosomal stalk of the 50S ribosomal subunit. Forms a multimeric L10(L12)X complex, where L10 forms an elongated spine to which 2 to 4 L12 dimers bind in a sequential fashion. Binds GTP-bound translation factors.

The protein resides in the plastid. It localises to the chloroplast. Functionally, forms part of the ribosomal stalk which helps the ribosome interact with GTP-bound translation factors. Is thus essential for accurate translation. This is Large ribosomal subunit protein bL12c from Cyanidium caldarium (Red alga).